The primary structure comprises 402 residues: Probable 2,3-bisphosphoglycerate-independent phosphoglycerate mutase (402 aa).

It belongs to the BPG-independent phosphoglycerate mutase family. A-PGAM subfamily.

It catalyses the reaction (2R)-2-phosphoglycerate = (2R)-3-phosphoglycerate. It participates in carbohydrate degradation; glycolysis; pyruvate from D-glyceraldehyde 3-phosphate: step 3/5. Its function is as follows. Catalyzes the interconversion of 2-phosphoglycerate and 3-phosphoglycerate. The protein is Probable 2,3-bisphosphoglycerate-independent phosphoglycerate mutase of Thermosipho melanesiensis (strain DSM 12029 / CIP 104789 / BI429).